We begin with the raw amino-acid sequence, 364 residues long: MALTLEELVKRFGGEIAGDAQCKVGGLAPLDQAGPQQLAFLANPKYLSQVESTRAGAVLIAPKDLEKLGAAAQGRTAGPRNFIVTPNPYAYFARVAQMFIDLATPPRAAGVHPSATIDPAAQVAATAVIGPHVTIEAGAVIEDGVQLDANVFVGRGTTIGAGSHFYPNASVYHGCKVGPRAIVHAGAVIGSDGFGFAPDFVGDGDARTGSWVKIPQVGGVTIGPDVEIGANTTIDRGAMADTVIEECVKIDNQVQIGHNCRIGAYTVIAGSAGIAGSTTIGRHCMIGGAAGIAGHVTLGDYVIITAKSGVSKSLPKAGIYTSAFPAVDHGEWNKSAALVRNLDKLRERIKALEAALAAQGGTDA.

His258 (proton acceptor) is an active-site residue.

This sequence belongs to the transferase hexapeptide repeat family. LpxD subfamily. In terms of assembly, homotrimer.

The enzyme catalyses a UDP-3-O-[(3R)-3-hydroxyacyl]-alpha-D-glucosamine + a (3R)-hydroxyacyl-[ACP] = a UDP-2-N,3-O-bis[(3R)-3-hydroxyacyl]-alpha-D-glucosamine + holo-[ACP] + H(+). The protein operates within bacterial outer membrane biogenesis; LPS lipid A biosynthesis. Functionally, catalyzes the N-acylation of UDP-3-O-acylglucosamine using 3-hydroxyacyl-ACP as the acyl donor. Is involved in the biosynthesis of lipid A, a phosphorylated glycolipid that anchors the lipopolysaccharide to the outer membrane of the cell. The protein is UDP-3-O-acylglucosamine N-acyltransferase of Burkholderia orbicola (strain MC0-3).